The primary structure comprises 228 residues: Lipoprotein-releasing system ATP-binding protein LolD (228 aa).

The region spanning 5–228 (LRCHQVCKTY…DGLLTDITGA (224 aa)) is the ABC transporter domain. 41–48 (GSSGSGKS) is an ATP binding site.

The protein belongs to the ABC transporter superfamily. Lipoprotein translocase (TC 3.A.1.125) family. As to quaternary structure, the complex is composed of two ATP-binding proteins (LolD) and two transmembrane proteins (LolC and LolE).

It is found in the cell inner membrane. In terms of biological role, part of the ABC transporter complex LolCDE involved in the translocation of mature outer membrane-directed lipoproteins, from the inner membrane to the periplasmic chaperone, LolA. Responsible for the formation of the LolA-lipoprotein complex in an ATP-dependent manner. The sequence is that of Lipoprotein-releasing system ATP-binding protein LolD from Vibrio cholerae serotype O1 (strain ATCC 39315 / El Tor Inaba N16961).